The following is a 604-amino-acid chain: Phosphomethylpyrimidine synthase (604 aa).

Substrate contacts are provided by residues Asn-218, Met-247, Tyr-276, His-312, 332-334 (SRG), 373-376 (DGLR), and Glu-412. His-416 serves as a coordination point for Zn(2+). Tyr-439 contacts substrate. His-480 lines the Zn(2+) pocket. [4Fe-4S] cluster is bound by residues Cys-560, Cys-563, and Cys-568.

It belongs to the ThiC family. Homodimer. [4Fe-4S] cluster is required as a cofactor.

It carries out the reaction 5-amino-1-(5-phospho-beta-D-ribosyl)imidazole + S-adenosyl-L-methionine = 4-amino-2-methyl-5-(phosphooxymethyl)pyrimidine + CO + 5'-deoxyadenosine + formate + L-methionine + 3 H(+). The protein operates within cofactor biosynthesis; thiamine diphosphate biosynthesis. Functionally, catalyzes the synthesis of the hydroxymethylpyrimidine phosphate (HMP-P) moiety of thiamine from aminoimidazole ribotide (AIR) in a radical S-adenosyl-L-methionine (SAM)-dependent reaction. The protein is Phosphomethylpyrimidine synthase of Zymomonas mobilis subsp. mobilis (strain ATCC 31821 / ZM4 / CP4).